We begin with the raw amino-acid sequence, 470 residues long: Zinc finger CCCH domain-containing protein 7 (470 aa).

A disordered region spans residues 122–144 (AYSKKESEKQSGQNNTSTASRNH). Residues 131-142 (QSGQNNTSTASR) are compositionally biased toward polar residues. C3H1-type zinc fingers lie at residues 240 to 269 (AKKK…HDPS), 273 to 294 (VCTK…HKVI), 295 to 321 (PERM…HVHV), 322 to 349 (NPIA…HSYN), and 350 to 372 (CPVF…HPKN). A compositionally biased stretch (basic residues) spans 370–381 (PKNQSKGRKRKR). The tract at residues 370-389 (PKNQSKGRKRKRTNEPSQKN) is disordered.

Its function is as follows. Possesses RNA-binding and ribonuclease activities in vitro. The chain is Zinc finger CCCH domain-containing protein 7 from Arabidopsis thaliana (Mouse-ear cress).